The chain runs to 1591 residues: Rho guanine nucleotide exchange factor TIAM1 (1591 aa).

Positions 1–70 (MGNAESQNVD…TPSIPQSLAE (70 aa)) are disordered. Gly2 carries N-myristoyl glycine lipidation. Residues 8–19 (NVDHEFYGEKHA) are compositionally biased toward basic and acidic residues. Residues 20-49 (SLGRKHTSRSLRLSHKTRRTRHASSGKAIH) show a composition bias toward basic residues. The segment covering 53-67 (EVSTRSSSTPSIPQS) has biased composition (low complexity). Phosphoserine is present on residues Ser231, Ser356, and Ser358. 2 disordered regions span residues 305–380 (QISL…DRAR) and 393–422 (MSTT…SPGQ). The span at 340 to 359 (TTDTDLLSRRSNATNSSYSP) shows a compositional bias: polar residues. Residues 367-376 (GSDSGSSSTG) are compositionally biased toward low complexity. Residues 412 to 422 (QSSGTLSSPGQ) are compositionally biased toward polar residues. Residues 434 to 549 (VRKAGALAVK…TAIHSACAAA (116 aa)) form the PH 1 domain. Ser695 carries the post-translational modification Phosphoserine. Positions 765–832 (TPSWFCLPNN…QPEEDIYELL (68 aa)) constitute an RBD domain. Position 829 is a phosphotyrosine; by NTRK2 (Tyr829). Residues 845 to 908 (NIHIEKSDAA…NNRAAGTLNS (64 aa)) form the PDZ domain. The segment at 933–1034 (GVELLENPPH…TSPQLATTRQ (102 aa)) is disordered. A compositionally biased stretch (polar residues) spans 958-975 (LTSNPGHSLSSEQGSSAE). The segment covering 977–990 (APEEGEGPDLESSD) has biased composition (acidic residues). Residues 1014-1028 (PSDSSPSPQDATSPQ) are compositionally biased toward low complexity. The 195-residue stretch at 1040-1234 (KLRKVICELL…NKVASHINEM (195 aa)) folds into the DH domain. Positions 1261 to 1397 (DLSMGDLLLH…KSVHSILRDK (137 aa)) constitute a PH 2 domain. Phosphotyrosine is present on Tyr1323. Residues Lys1404 and Lys1420 each participate in a glycyl lysine isopeptide (Lys-Gly) (interchain with G-Cter in ubiquitin) cross-link. The interval 1456–1481 (TIDSDAISASSPEKEPQQPAGGGDTD) is disordered. At Ser1519 the chain carries Phosphoserine.

The protein belongs to the TIAM family. Component of the Par polarity complex, composed of at least phosphorylated PRKCZ, PARD3 and TIAM1. Interacts with BAIAP2. Interacts (via PDZ domain) with CNTNAP4, SDC1 and SDC3 (via C-terminus). Interacts with CD44, PARD3 and MAPK8IP2. Interacts with EPHA8; regulates clathrin-mediated endocytosis of EPHA8. Interacts with NTRK2; mediates the activation of RAC1 by BDNF. In terms of processing, ubiquitinated. Undergoes 'Lys-48' ubiquitination at Lys-1404 and Lys-1420 by a CUL3(KBTBD6/7) E3 ubiquitin ligase complex composed of CUL3, RBX1, KBTBD6 and KBTBD7. 'Lys-48' ubiquitination at Lys-1404 and Lys-1420 triggers proteasomal degradation. Ubiquitination at Lys-1404 and Lys-1420 by CUL3(KBTBD6/7) also requires the membrane-associated protein GABARAP and may therefore be spatially restricted within the cell. In terms of tissue distribution, highly expressed in brain and testis and at low or moderate levels in almost all other normal tissues. Found in virtually all analyzed tumor cell lines including B- and T-lymphomas, neuroblastomas, melanomas and carcinomas.

The protein resides in the cell junction. Its subcellular location is the cell membrane. Guanyl-nucleotide exchange factor that activates RHO-like proteins and connects extracellular signals to cytoskeletal activities. Activates RAC1, CDC42, and to a lesser extent RHOA and their downstream signaling to regulate processes like cell adhesion and cell migration. The protein is Rho guanine nucleotide exchange factor TIAM1 of Mus musculus (Mouse).